The sequence spans 413 residues: Type II methyltransferase M.NaeI (413 aa).

The region spanning 4-317 (LEVVEICAGA…KRIRAALNME (314 aa)) is the SAM-dependent MTase C5-type domain. Cys78 is an active-site residue.

The protein belongs to the class I-like SAM-binding methyltransferase superfamily. C5-methyltransferase family.

The catalysed reaction is a 2'-deoxycytidine in DNA + S-adenosyl-L-methionine = a 5-methyl-2'-deoxycytidine in DNA + S-adenosyl-L-homocysteine + H(+). In terms of biological role, a methylase that recognizes the double-stranded sequence 5'-GCCGGC-3', methylates C-? on both strands, and protects the DNA from cleavage by the NaeI endonuclease. The sequence is that of Type II methyltransferase M.NaeI from Lentzea aerocolonigenes (Lechevalieria aerocolonigenes).